Consider the following 331-residue polypeptide: Ribosomal RNA small subunit methyltransferase H (331 aa).

S-adenosyl-L-methionine is bound by residues 39–41 (GGY), D56, F83, D100, and Q107.

It belongs to the methyltransferase superfamily. RsmH family.

The protein localises to the cytoplasm. It carries out the reaction cytidine(1402) in 16S rRNA + S-adenosyl-L-methionine = N(4)-methylcytidine(1402) in 16S rRNA + S-adenosyl-L-homocysteine + H(+). Functionally, specifically methylates the N4 position of cytidine in position 1402 (C1402) of 16S rRNA. In Bartonella bacilliformis (strain ATCC 35685 / KC583 / Herrer 020/F12,63), this protein is Ribosomal RNA small subunit methyltransferase H.